The sequence spans 167 residues: Modulator of smoothened protein (167 aa).

The next 4 membrane-spanning stretches (helical) occupy residues 7–29 (ISGCLFLAADIFAIASIANPDWI), 68–88 (TLFFIILGIVSLTITCGLLVI), 101–121 (WIAFMGMVLFCMAALIFPVGF), and 139–159 (VGSSYVLFVLSIFFTIVGLLF).

Its subcellular location is the cell projection. It localises to the cilium membrane. It is found in the cell membrane. In terms of biological role, acts as a negative regulator of hedgehog signaling probably by promoting internalization and subsequent degradation of smoothened protein (SMO) present in the ciliary membrane. Plays a role in sonic hedgehog (SHH)-induced spinal neural progenitor cells differentiation. The polypeptide is Modulator of smoothened protein (Danio rerio (Zebrafish)).